A 283-amino-acid polypeptide reads, in one-letter code: Pantothenate synthetase (283 aa).

Position 30–37 (30–37 (MGNLHDGH)) interacts with ATP. The Proton donor role is filled by histidine 37. Glutamine 61 is a (R)-pantoate binding site. Glutamine 61 contacts beta-alanine. 149–152 (GEKD) serves as a coordination point for ATP. Glutamine 155 lines the (R)-pantoate pocket. An ATP-binding site is contributed by 186–189 (LSSR).

Belongs to the pantothenate synthetase family. In terms of assembly, homodimer.

The protein resides in the cytoplasm. The enzyme catalyses (R)-pantoate + beta-alanine + ATP = (R)-pantothenate + AMP + diphosphate + H(+). It functions in the pathway cofactor biosynthesis; (R)-pantothenate biosynthesis; (R)-pantothenate from (R)-pantoate and beta-alanine: step 1/1. In terms of biological role, catalyzes the condensation of pantoate with beta-alanine in an ATP-dependent reaction via a pantoyl-adenylate intermediate. This Escherichia coli (strain SMS-3-5 / SECEC) protein is Pantothenate synthetase.